The chain runs to 592 residues: Frizzled-9 (592 aa).

The N-terminal stretch at 1–23 (MAVPPLLRGALLLWQLLATGGAA) is a signal peptide. The Extracellular segment spans residues 24-230 (LEIGRFDPER…EVFWSRRDKD (207 aa)). One can recognise an FZ domain in the interval 35–156 (RGPAPCQAME…NDPHALCMEA (122 aa)). Cystine bridges form between cysteine 40/cysteine 101, cysteine 48/cysteine 94, cysteine 85/cysteine 123, cysteine 112/cysteine 153, and cysteine 116/cysteine 140. N-linked (GlcNAc...) asparagine glycosylation is present at asparagine 54. Positions 59 to 173 (PNLLGHTSQG…PTEPHKGLGM (115 aa)) are required for Wnt-activated receptor activity. The N-linked (GlcNAc...) asparagine glycan is linked to asparagine 159. Residues 231-251 (FALVWMAVWSALCFFSTAFTV) form a helical membrane-spanning segment. The Cytoplasmic segment spans residues 252-267 (FTFLLEPHRFQYPERP). Residues 268 to 288 (IIFLSMCYNVYSLAFLIRAVA) form a helical membrane-spanning segment. Topologically, residues 289–316 (GAQSVACDQEAGALYVIQEGLENTGCTL) are extracellular. A helical membrane pass occupies residues 317-337 (VFLLLYYFGMASSLWWVVLTL). The Cytoplasmic portion of the chain corresponds to 338 to 356 (TWFLAAGKKWGHEAIEAHG). A helical membrane pass occupies residues 357-377 (SYFHMAAWGLPALKTIVVLTL). The Extracellular segment spans residues 378–401 (RKVAGDELTGLCYVASMDPAALTG). A helical membrane pass occupies residues 402 to 422 (FVLVPLSCYLVLGTSFLLTGF). Residues 423–448 (VALFHIRKIMKTGGTNTEKLEKLMVK) lie on the Cytoplasmic side of the membrane. Residues 449 to 469 (IGVFSILYTVPATCVIVCYVY) form a helical membrane-spanning segment. Over 470-509 (ERLNMDFWRLRATEQPCTAATVPGGRRDCSLPGGSVPTVA) the chain is Extracellular. Residues 510 to 530 (VFMLKIFMSLVVGITSGVWVW) traverse the membrane as a helical segment. At 531–592 (SSKTFQTWQS…DPSLENPTHL (62 aa)) the chain is on the cytoplasmic side. Residues 533–538 (KTFQTW) carry the Lys-Thr-X-X-X-Trp motif, mediates interaction with the PDZ domain of Dvl family members motif. The segment at 555-592 (ACRTPGGYGRGTHCHYKAPTVVLHMTKTDPSLENPTHL) is required for CTNNB1 accumulation and TCF transcription factor activity.

It belongs to the G-protein coupled receptor Fz/Smo family. In terms of processing, ubiquitinated by ZNRF3, leading to its degradation by the proteasome. In terms of tissue distribution, in the embryo, found in the neural tube, trunk skeletal muscle precursors (myotomes), limb skeletal anlagen, craniofacial regions and nephric ducts. In the adult, expression is abundant in heart, brain, testis and skeletal muscle. In the testis, expressed in all spermatogenic cell types. Lower levels in adult lung, liver and kidney. Barely detectable in spleen. Expressed also in chondrocytes.

Its subcellular location is the cell membrane. Receptor for WNT2 that is coupled to the beta-catenin canonical signaling pathway, which leads to the activation of disheveled proteins, inhibition of GSK-3 kinase, nuclear accumulation of beta-catenin and activation of Wnt target genes. Plays a role in neuromuscular junction (NMJ) assembly by negatively regulating the clustering of acetylcholine receptors (AChR) through the beta-catenin canonical signaling pathway. May play a role in neural progenitor cells (NPCs) viability through the beta-catenin canonical signaling pathway by negatively regulating cell cycle arrest leading to inhibition of neuron apoptotic process. During hippocampal development, regulates neuroblast proliferation and apoptotic cell death. Controls bone formation through non canonical Wnt signaling mediated via ISG15. Positively regulates bone regeneration through non canonical Wnt signaling. The chain is Frizzled-9 (Fzd9) from Mus musculus (Mouse).